A 381-amino-acid polypeptide reads, in one-letter code: Creatine kinase B-type (381 aa).

Ser4 is modified (phosphoserine). A Phosphagen kinase N-terminal domain is found at 11–98 (KLRFPAEDEF…FDPIIEERHG (88 aa)). Thr35 bears the Phosphothreonine mark. Lys45 participates in a covalent cross-link: Glycyl lysine isopeptide (Lys-Gly) (interchain with G-Cter in ubiquitin). Val72 serves as a coordination point for creatine. Residues 96–110 (RHGGYQPSDEHKTDL) are compositionally biased toward basic and acidic residues. The interval 96–123 (RHGGYQPSDEHKTDLNPDNLQGGDDLDP) is disordered. Residue Lys107 forms a Glycyl lysine isopeptide (Lys-Gly) (interchain with G-Cter in ubiquitin) linkage. Tyr125 is modified (phosphotyrosine). One can recognise a Phosphagen kinase C-terminal domain in the interval 125–367 (YVLSSRVRTG…KLLIEMEQRL (243 aa)). ATP-binding positions include 128–132 (SSRVR), Arg130, Arg132, and His191. The tract at residues 130 to 138 (RVRTGRSIR) is internal MTS-like signal. The residue at position 199 (Ser199) is a Phosphoserine. Glu232 contributes to the creatine binding site. Residue Arg236 coordinates ATP. Position 269 is a 3'-nitrotyrosine (Tyr269). Creatine is bound at residue Ser285. Arg292 serves as a coordination point for ATP. At Ser309 the chain carries Phosphoserine. ATP contacts are provided by residues Arg320, 320-325 (RGTGGV), and Asp335. Thr322 is modified (phosphothreonine). Lys381 participates in a covalent cross-link: Glycyl lysine isopeptide (Lys-Gly) (interchain with G-Cter in ubiquitin).

This sequence belongs to the ATP:guanido phosphotransferase family. Dimer of identical or non-identical chains, which can be either B (brain type) or M (muscle type). With MM being the major form in skeletal muscle and myocardium, MB existing in myocardium, and BB existing in many tissues, especially brain. Interacts with SLC12A6 (via C-terminus); the interaction may be required for SLC12A6 potassium-chloride cotransport activity. Ubiquitinated by the ECS(ASB9) complex, leading to its degradation by the proteasome. Expressed in hippocampus and corpus callosum (at protein level).

The protein resides in the cytoplasm. The protein localises to the cytosol. It is found in the mitochondrion. It localises to the cell membrane. The enzyme catalyses creatine + ATP = N-phosphocreatine + ADP + H(+). In terms of biological role, reversibly catalyzes the transfer of phosphate between ATP and various phosphogens (e.g. creatine phosphate). Creatine kinase isoenzymes play a central role in energy transduction in tissues with large, fluctuating energy demands, such as skeletal muscle, heart, brain and spermatozoa. Acts as a key regulator of adaptive thermogenesis as part of the futile creatine cycle: localizes to the mitochondria of thermogenic fat cells and acts by mediating phosphorylation of creatine to initiate a futile cycle of creatine phosphorylation and dephosphorylation. During the futile creatine cycle, creatine and N-phosphocreatine are in a futile cycle, which dissipates the high energy charge of N-phosphocreatine as heat without performing any mechanical or chemical work. The protein is Creatine kinase B-type of Mus musculus (Mouse).